Reading from the N-terminus, the 133-residue chain is Ribonuclease VapC10 (133 aa).

Residues 2–119 enclose the PINc domain; the sequence is ILVDSDVLIA…NVWHFPMFEQ (118 aa). 2 residues coordinate Mg(2+): Asp-5 and Asp-92.

It belongs to the PINc/VapC protein family. Mg(2+) is required as a cofactor.

Functionally, toxic component of a type II toxin-antitoxin (TA) system. An RNase. The cognate antitoxin is VapB10. The chain is Ribonuclease VapC10 from Mycobacterium tuberculosis (strain CDC 1551 / Oshkosh).